Consider the following 283-residue polypeptide: DegV domain-containing protein BH3627 (283 aa).

Residues 4–281 (IAIVTDSTAY…EGSIGLSWYI (278 aa)) form the DegV domain. Residues threonine 62 and serine 95 each contribute to the hexadecanoate site.

May bind long-chain fatty acids, such as palmitate, and may play a role in lipid transport or fatty acid metabolism. In Halalkalibacterium halodurans (strain ATCC BAA-125 / DSM 18197 / FERM 7344 / JCM 9153 / C-125) (Bacillus halodurans), this protein is DegV domain-containing protein BH3627.